The chain runs to 598 residues: Probable translation initiation factor IF-2 (598 aa).

The tr-type G domain occupies 3-225; that stretch reads LRCPIVSVLG…GLAQRFLEQK (223 aa). Residues 12–19 are G1; that stretch reads GHVDHGKT. 12–19 is a binding site for GTP; sequence GHVDHGKT. The G2 stretch occupies residues 37-41; it reads GITQH. The interval 76–79 is G3; that stretch reads DTPG. Residues 76–80 and 130–133 each bind GTP; these read DTPGH and NKVD. The interval 130 to 133 is G4; sequence NKVD. A G5 region spans residues 200–202; sequence SAM.

It belongs to the TRAFAC class translation factor GTPase superfamily. Classic translation factor GTPase family. IF-2 subfamily.

Function in general translation initiation by promoting the binding of the formylmethionine-tRNA to ribosomes. Seems to function along with eIF-2. In Methanococcus maripaludis (strain DSM 14266 / JCM 13030 / NBRC 101832 / S2 / LL), this protein is Probable translation initiation factor IF-2.